The following is a 218-amino-acid chain: ATP-dependent Clp protease proteolytic subunit 2 (218 aa).

Serine 114 serves as the catalytic Nucleophile. Histidine 139 is an active-site residue.

It belongs to the peptidase S14 family. Fourteen ClpP subunits assemble into 2 heptameric rings which stack back to back to give a disk-like structure with a central cavity, resembling the structure of eukaryotic proteasomes.

Its subcellular location is the cytoplasm. It carries out the reaction Hydrolysis of proteins to small peptides in the presence of ATP and magnesium. alpha-casein is the usual test substrate. In the absence of ATP, only oligopeptides shorter than five residues are hydrolyzed (such as succinyl-Leu-Tyr-|-NHMec, and Leu-Tyr-Leu-|-Tyr-Trp, in which cleavage of the -Tyr-|-Leu- and -Tyr-|-Trp bonds also occurs).. In terms of biological role, cleaves peptides in various proteins in a process that requires ATP hydrolysis. Has a chymotrypsin-like activity. Plays a major role in the degradation of misfolded proteins. Probably partially responsible for degradation of ECF sigma factor SigR prime. This chain is ATP-dependent Clp protease proteolytic subunit 2, found in Streptomyces coelicolor (strain ATCC BAA-471 / A3(2) / M145).